Consider the following 341-residue polypeptide: Nucleoid-associated protein Sden_2335 (341 aa).

The protein belongs to the YejK family.

The protein resides in the cytoplasm. The protein localises to the nucleoid. This Shewanella denitrificans (strain OS217 / ATCC BAA-1090 / DSM 15013) protein is Nucleoid-associated protein Sden_2335.